A 286-amino-acid polypeptide reads, in one-letter code: Putative ribosome-inactivating protein (286 aa).

The signal sequence occupies residues 1–21; that stretch reads MNRFSVLMCLVILSIFHGVPT. Asn103 and Asn110 each carry an N-linked (GlcNAc...) asparagine glycan. The active site involves Glu185. The N-linked (GlcNAc...) asparagine glycan is linked to Asn252.

The protein belongs to the ribosome-inactivating protein family. Type 1 RIP subfamily.

It carries out the reaction Endohydrolysis of the N-glycosidic bond at one specific adenosine on the 28S rRNA.. The chain is Putative ribosome-inactivating protein from Cucumis ficifolius (Cucumis figarei).